Consider the following 363-residue polypeptide: Histidinol-phosphate aminotransferase (363 aa).

At Lys226 the chain carries N6-(pyridoxal phosphate)lysine.

This sequence belongs to the class-II pyridoxal-phosphate-dependent aminotransferase family. Histidinol-phosphate aminotransferase subfamily. Homodimer. The cofactor is pyridoxal 5'-phosphate.

It carries out the reaction L-histidinol phosphate + 2-oxoglutarate = 3-(imidazol-4-yl)-2-oxopropyl phosphate + L-glutamate. Its pathway is amino-acid biosynthesis; L-histidine biosynthesis; L-histidine from 5-phospho-alpha-D-ribose 1-diphosphate: step 7/9. This Campylobacter lari (strain RM2100 / D67 / ATCC BAA-1060) protein is Histidinol-phosphate aminotransferase.